We begin with the raw amino-acid sequence, 479 residues long: tRNA modification GTPase MnmE (479 aa).

(6S)-5-formyl-5,6,7,8-tetrahydrofolate is bound by residues Arg-30, Glu-91, and Lys-130. Residues 226 to 402 (GFRIVLTGLP…VLKDLVKEFA (177 aa)) enclose the TrmE-type G domain. K(+) is bound at residue Asn-236. GTP contacts are provided by residues 236 to 241 (NVGKSS), 255 to 261 (TDIPGTT), and 280 to 283 (DTAG). Ser-240 contributes to the Mg(2+) binding site. K(+)-binding residues include Thr-255, Ile-257, and Thr-260. Thr-261 is a binding site for Mg(2+). Lys-479 serves as a coordination point for (6S)-5-formyl-5,6,7,8-tetrahydrofolate.

The protein belongs to the TRAFAC class TrmE-Era-EngA-EngB-Septin-like GTPase superfamily. TrmE GTPase family. Homodimer. Heterotetramer of two MnmE and two MnmG subunits. The cofactor is K(+).

It localises to the cytoplasm. Functionally, exhibits a very high intrinsic GTPase hydrolysis rate. Involved in the addition of a carboxymethylaminomethyl (cmnm) group at the wobble position (U34) of certain tRNAs, forming tRNA-cmnm(5)s(2)U34. In Bdellovibrio bacteriovorus (strain ATCC 15356 / DSM 50701 / NCIMB 9529 / HD100), this protein is tRNA modification GTPase MnmE.